Here is a 311-residue protein sequence, read N- to C-terminus: Progestin and adipoQ receptor family member 3 (311 aa).

The segment at 1–20 (MHQKLLKSAHYIELGSYQYW) is required for interaction with SREBF2. Topologically, residues 1–70 (MHQKLLKSAH…KSLFILSNET (70 aa)) are cytoplasmic. Residues 41–60 (KDNPYITDGYRAYLPSRLCI) are required for interaction with SCAP. Residues 61–71 (KSLFILSNETV) form a golgi targeting region. The helical transmembrane segment at 71–91 (VNIWSHLLGFFLFFTLGIYDM) threads the bilayer. Topologically, residues 92-104 (TSVLPSASASRED) are lumenal. The chain crosses the membrane as a helical span at residues 105–125 (FVICSICLFCFQVCMLCSVGY). At 126 to 145 (HLFSCHRSEKTCRRWMALDY) the chain is on the cytoplasmic side. The chain crosses the membrane as a helical span at residues 146–166 (AGISIGILGCYVSGVFYAFYC). Residues 167-172 (NNYWRQ) lie on the Lumenal side of the membrane. The chain crosses the membrane as a helical span at residues 173-193 (VYLITVLAMILAVFFAQIHPS). Residues 194-203 (YLTQQWQRLR) lie on the Cytoplasmic side of the membrane. Residues 204–224 (PIIFCSVSGYGVIPTLHWVWL) form a helical membrane-spanning segment. Residues 225-235 (NGGVSAPIVQD) lie on the Lumenal side of the membrane. A helical membrane pass occupies residues 236–256 (FAPRVIVMYVIALLAFLFYIS). The Cytoplasmic portion of the chain corresponds to 257 to 275 (KVPERYFPGQLNYLGSSHQ). The chain crosses the membrane as a helical span at residues 276–296 (IWHVLAVVMLYWWHQSTVYVM). At 297 to 311 (QYRHSKPCPDYVSHL) the chain is on the lumenal side. Residues 299 to 303 (RHSKP) form a golgi targeting region.

It belongs to the ADIPOR family. In terms of assembly, interacts with SCAP and SREBF2; the interactions are direct, increase in low cholesterol conditions and tether SCAP:SREBP complex to the Golgi apparatus. Interaction with SCAP is mutually exclusive with INSIG1. In hepatocytes, interacts with PPARA and HUWE1; the interactions promote PPARA poylubiquitination and HUWE1-mediated degradation. In macrophages, interacts with PPARG and STUB1; the interactions promote PPARG poylubiquitination and STUB1-mediated degradation.

It is found in the golgi apparatus membrane. Functionally, golgi-anchored protein which modulates its interactors acitivies by tethering them to the Golgi apparatus. Functions as a spatial regulator of RAF1 kinase by sequestrating it to the Golgi apparatus. Acts as a positive regulator of cholesterol biosynthesis by mediating the anchoring of the SCAP:SREBP complex in the Golgi apparatus, thereby promoting SCAP:SREBF2 complex formation, potentiating SREBF2 and SREBF1 processing and enhancing lipid synthesis. Also regulates PPARA and PPARG functions by mediating their interaction with E3 ubiquitin ligases, such as STUB1 or HUWE1, leading to their polyubiquitination and proteasome-mediated degradation. In Mus musculus (Mouse), this protein is Progestin and adipoQ receptor family member 3.